Consider the following 327-residue polypeptide: WRKY transcription factor WRKY76 (327 aa).

Positions 56 to 76 (AKILEAKVTQMSEENRRLTEV) form a coiled coil. The disordered stretch occupies residues 88-134 (LGLDGSASPPRPVSPLSGKKRSRESMETANSCDANSNRHQGGDADHA). The Nuclear localization signal motif lies at 106 to 112 (KKRSRES). Over residues 114-126 (ETANSCDANSNRH) the composition is skewed to polar residues. Residues 160–226 (DTSLVVKDGY…YEGEHNHPHP (67 aa)) constitute a DNA-binding region (WRKY).

The protein belongs to the WRKY group II-a family.

It is found in the nucleus. Transcription repressor. Interacts specifically with the W box (5'-(T)TGAC[CT]-3'), a frequently occurring elicitor-responsive cis-acting element. Regulates, probably indirectly, the activation of defense-related genes during defense response. Modulates plant innate immunity against X.oryzae pv. oryzae (Xoo). The polypeptide is WRKY transcription factor WRKY76 (Oryza sativa subsp. indica (Rice)).